The following is a 347-amino-acid chain: NADH-ubiquinone oxidoreductase chain 2 (347 aa).

A run of 10 helical transmembrane segments spans residues 1–21 (MNPLTLSLVLTTMMAGTLIVM), 25–45 (HWFMIWVGFEMNMLAIIPLLT), 67–87 (SMLLMMAAITNLLYTGHWSIM), 111–131 (FHFWVPEVTQGIPLMSGLILL), 144–164 (MIMPLINTDILLIMSLMSIAI), 178–198 (IMAYSSIAHMGWMMAVLAYNP), 201–221 (TLLNLYIYIPMTITTFMLLMI), 237–257 (LPLITTLILITMLSLGGLPPL), 274–294 (SSIIMPTLMTLLALLNLYFYT), and 326–346 (LPLMIMISTLVPPLAPMMPIL).

Belongs to the complex I subunit 2 family. In terms of assembly, core subunit of respiratory chain NADH dehydrogenase (Complex I) which is composed of 45 different subunits. Interacts with TMEM242.

The protein resides in the mitochondrion inner membrane. It carries out the reaction a ubiquinone + NADH + 5 H(+)(in) = a ubiquinol + NAD(+) + 4 H(+)(out). Functionally, core subunit of the mitochondrial membrane respiratory chain NADH dehydrogenase (Complex I) which catalyzes electron transfer from NADH through the respiratory chain, using ubiquinone as an electron acceptor. Essential for the catalytic activity and assembly of complex I. The sequence is that of NADH-ubiquinone oxidoreductase chain 2 from Myotis simus (Velvety myotis).